Reading from the N-terminus, the 540-residue chain is CTP synthase (540 aa).

Residues 1 to 267 (MTKYIFVTGG…DQKVCDFLHL (267 aa)) form an amidoligase domain region. Ser13 contacts CTP. Residue Ser13 participates in UTP binding. 14 to 19 (SLGKGI) provides a ligand contact to ATP. Tyr54 is a binding site for L-glutamine. Asp71 is an ATP binding site. Mg(2+)-binding residues include Asp71 and Glu141. CTP contacts are provided by residues 148–150 (DIE), 188–193 (KTKPTQ), and Lys224. UTP contacts are provided by residues 188–193 (KTKPTQ) and Lys224. Positions 294 to 537 (TITLVGKYVE…IGAASGLPAQ (244 aa)) constitute a Glutamine amidotransferase type-1 domain. Residue Gly356 coordinates L-glutamine. Cys383 serves as the catalytic Nucleophile; for glutamine hydrolysis. L-glutamine contacts are provided by residues 384–387 (LGMQ), Glu407, and Arg465. Catalysis depends on residues His510 and Glu512.

It belongs to the CTP synthase family. As to quaternary structure, homotetramer.

It catalyses the reaction UTP + L-glutamine + ATP + H2O = CTP + L-glutamate + ADP + phosphate + 2 H(+). The enzyme catalyses L-glutamine + H2O = L-glutamate + NH4(+). It carries out the reaction UTP + NH4(+) + ATP = CTP + ADP + phosphate + 2 H(+). The protein operates within pyrimidine metabolism; CTP biosynthesis via de novo pathway; CTP from UDP: step 2/2. With respect to regulation, allosterically activated by GTP, when glutamine is the substrate; GTP has no effect on the reaction when ammonia is the substrate. The allosteric effector GTP functions by stabilizing the protein conformation that binds the tetrahedral intermediate(s) formed during glutamine hydrolysis. Inhibited by the product CTP, via allosteric rather than competitive inhibition. Its function is as follows. Catalyzes the ATP-dependent amination of UTP to CTP with either L-glutamine or ammonia as the source of nitrogen. Regulates intracellular CTP levels through interactions with the four ribonucleotide triphosphates. This Lactobacillus johnsonii (strain CNCM I-12250 / La1 / NCC 533) protein is CTP synthase.